The primary structure comprises 241 residues: DNA repair protein RecO (241 aa).

It belongs to the RecO family.

In terms of biological role, involved in DNA repair and RecF pathway recombination. The sequence is that of DNA repair protein RecO from Phocaeicola vulgatus (strain ATCC 8482 / DSM 1447 / JCM 5826 / CCUG 4940 / NBRC 14291 / NCTC 11154) (Bacteroides vulgatus).